The primary structure comprises 275 residues: Cell division protein FtsQ (275 aa).

The tract at residues 1–20 (MRDLHKKKPRPVTQNRLKKP) is disordered. Over 1-38 (MRDLHKKKPRPVTQNRLKKPPKTCKPINYRGILKKTAK) the chain is Cytoplasmic. Residues 39-61 (VVGGAALISAVGCAGYGIYRIIA) form a helical membrane-spanning segment. The Periplasmic segment spans residues 62–275 (GTTFFKLERI…YSDKIIVKKV (214 aa)). One can recognise a POTRA domain in the interval 66–134 (FKLERIEVSE…NTLSMQIAER (69 aa)).

The protein belongs to the FtsQ/DivIB family. FtsQ subfamily.

The protein localises to the cell inner membrane. Its function is as follows. Essential cell division protein. This Geotalea daltonii (strain DSM 22248 / JCM 15807 / FRC-32) (Geobacter daltonii) protein is Cell division protein FtsQ.